Consider the following 145-residue polypeptide: Catabolic 3-dehydroquinase (145 aa).

The Proton acceptor role is filled by Tyr-24. 3 residues coordinate substrate: Asn-77, His-83, and Asp-90. The Proton donor role is filled by His-103. Residues 104 to 105 (IT) and Arg-114 contribute to the substrate site.

It belongs to the type-II 3-dehydroquinase family. In terms of assembly, homododecamer. Adopts a ring-like structure, composed of an arrangement of two hexameric rings stacked on top of one another.

It carries out the reaction 3-dehydroquinate = 3-dehydroshikimate + H2O. The protein operates within aromatic compound metabolism; 3,4-dihydroxybenzoate biosynthesis; 3,4-dihydroxybenzoate from 3-dehydroquinate: step 1/2. Functionally, is involved in the catabolism of quinate. Allows the utilization of quinate as carbon source via the beta-ketoadipate pathway. The protein is Catabolic 3-dehydroquinase of Clavispora lusitaniae (strain ATCC 42720) (Yeast).